The sequence spans 365 residues: Anhydro-N-acetylmuramic acid kinase (365 aa).

9 to 16 (GTSLDGVD) contacts ATP.

The protein belongs to the anhydro-N-acetylmuramic acid kinase family.

It carries out the reaction 1,6-anhydro-N-acetyl-beta-muramate + ATP + H2O = N-acetyl-D-muramate 6-phosphate + ADP + H(+). It functions in the pathway amino-sugar metabolism; 1,6-anhydro-N-acetylmuramate degradation. It participates in cell wall biogenesis; peptidoglycan recycling. Its function is as follows. Catalyzes the specific phosphorylation of 1,6-anhydro-N-acetylmuramic acid (anhMurNAc) with the simultaneous cleavage of the 1,6-anhydro ring, generating MurNAc-6-P. Is required for the utilization of anhMurNAc either imported from the medium or derived from its own cell wall murein, and thus plays a role in cell wall recycling. This Zymomonas mobilis subsp. mobilis (strain ATCC 31821 / ZM4 / CP4) protein is Anhydro-N-acetylmuramic acid kinase.